Reading from the N-terminus, the 387-residue chain is Migration and invasion-inhibitory protein (387 aa).

Positions asparagine 50–threonine 59 are enriched in polar residues. Disordered stretches follow at residues asparagine 50–aspartate 80 and valine 133–proline 172. Over residues serine 60–serine 69 the composition is skewed to low complexity. Basic and acidic residues predominate over residues glutamine 70–aspartate 80. A Phosphoserine modification is found at serine 307.

Interacts with IGFBP2.

Its function is as follows. Inhibits glioma cells invasion and down-regulates adhesion- and motility-associated genes such as NFKB2 and ICAM1. Exhibits opposing effects to IGFBP2 on cell invasion. The polypeptide is Migration and invasion-inhibitory protein (Miip) (Mus musculus (Mouse)).